The following is a 319-amino-acid chain: Protein HEXIM1 (319 aa).

Residues 1 to 22 (MELIKEETAPEDDSRGRQRDCR) show a composition bias toward basic and acidic residues. Disordered stretches follow at residues 1 to 111 (MELI…KKRR), 157 to 223 (LMEE…LQKD), 262 to 286 (NNWL…RVRE), and 299 to 319 (NELL…SQPS). Residues 24–35 (SVVSSKQVQRNQ) are compositionally biased toward polar residues. The segment covering 49–61 (PMCRDRSDPEPRT) has biased composition (basic and acidic residues). The span at 97-111 (GKKKHRRRPSKKKRR) shows a compositional bias: basic residues. A compositionally biased stretch (acidic residues) spans 185–202 (TASEDENFEAEEDDEEEG). Positions 203 to 216 (GGGSDGMGRPGQAG) are enriched in gly residues. Positions 240–306 (SKQELVREYL…ENNELLLKTP (67 aa)) form a coiled coil. The segment covering 306–319 (PASNEPGLNQSQPS) has biased composition (polar residues).

The protein belongs to the HEXIM family. Homooligomer and heterooligomer. Core component of the 7SK RNP complex.

The protein resides in the nucleus. Its subcellular location is the cytoplasm. Functionally, transcriptional regulator which functions as a general RNA polymerase II transcription inhibitor. Core component of the 7SK RNP complex: in cooperation with 7SK snRNA sequesters P-TEFb in a large inactive 7SK snRNP complex preventing RNA polymerase II phosphorylation and subsequent transcriptional elongation. Plays a role in the regulation of DNA virus-mediated innate immune response by assembling into the HDP-RNP complex, a complex that serves as a platform for IRF3 phosphorylation and subsequent innate immune response activation through the cGAS-STING pathway. In Danio rerio (Zebrafish), this protein is Protein HEXIM1 (hexim1).